Here is a 65-residue protein sequence, read N- to C-terminus: Large ribosomal subunit protein uL29 (65 aa).

This sequence belongs to the universal ribosomal protein uL29 family.

The protein is Large ribosomal subunit protein uL29 of Desulforapulum autotrophicum (strain ATCC 43914 / DSM 3382 / VKM B-1955 / HRM2) (Desulfobacterium autotrophicum).